A 399-amino-acid polypeptide reads, in one-letter code: Succinate--CoA ligase [ADP-forming] subunit beta (399 aa).

An ATP-grasp domain is found at 9 to 254 (KQVLAKYGVP…EDEEDPMELE (246 aa)). ATP contacts are provided by residues K46, 53 to 55 (GRG), E109, C112, and E117. Mg(2+) is bound by residues N209 and D223. Substrate is bound by residues N274 and 331–333 (GIM).

This sequence belongs to the succinate/malate CoA ligase beta subunit family. Heterotetramer of two alpha and two beta subunits. The cofactor is Mg(2+).

The enzyme catalyses succinate + ATP + CoA = succinyl-CoA + ADP + phosphate. It carries out the reaction GTP + succinate + CoA = succinyl-CoA + GDP + phosphate. It functions in the pathway carbohydrate metabolism; tricarboxylic acid cycle; succinate from succinyl-CoA (ligase route): step 1/1. Succinyl-CoA synthetase functions in the citric acid cycle (TCA), coupling the hydrolysis of succinyl-CoA to the synthesis of either ATP or GTP and thus represents the only step of substrate-level phosphorylation in the TCA. The beta subunit provides nucleotide specificity of the enzyme and binds the substrate succinate, while the binding sites for coenzyme A and phosphate are found in the alpha subunit. This Rhodospirillum rubrum (strain ATCC 11170 / ATH 1.1.1 / DSM 467 / LMG 4362 / NCIMB 8255 / S1) protein is Succinate--CoA ligase [ADP-forming] subunit beta.